A 375-amino-acid chain; its full sequence is Ubl carboxyl-terminal hydrolase 18 (375 aa).

Positions 18 to 45 (ESPQSPADLEEKKEEDSNMKREQPRERP) are disordered. Positions 26–45 (LEEKKEEDSNMKREQPRERP) are enriched in basic and acidic residues. One can recognise a USP domain in the interval 55–373 (VGLHNIGQTC…TAYLLVYMKM (319 aa)). Cys64 functions as the Nucleophile in the catalytic mechanism. His321 (proton acceptor) is an active-site residue.

It belongs to the peptidase C19 family. In terms of assembly, interacts with STAT2; the interaction is direct. Interacts with IFNAR2; indirectly via STAT2, it negatively regulates the assembly of the ternary interferon-IFNAR1-IFNAR2 complex and inhibits type I interferon signaling. Interacts with STING1. Interacts with USP20.

The enzyme catalyses Thiol-dependent hydrolysis of ester, thioester, amide, peptide and isopeptide bonds formed by the C-terminal Gly of ubiquitin (a 76-residue protein attached to proteins as an intracellular targeting signal).. Its function is as follows. Interferon-induced ISG15-specific protease that plays a crucial role for maintaining a proper balance of ISG15-conjugated proteins in cells. Regulates protein ISGylation by efficiently cleaving ISG15 conjugates linked via isopeptide bonds. Regulates T-cell activation and T-helper 17 (Th17) cell differentiation by deubiquitinating TAK1, likely to keep TAK1-TAB complexes in steady conditions. In turn, restricts activation of NF-kappa-B, NFAT, and JNK as well as expression of IL2 in T-cells after TCR activation. Acts as a molecular adapter with USP20 to promote innate antiviral response through deubiquitinating STING1. Involved also in the negative regulation of the inflammatory response triggered by type I interferon. Upon recruitment by STAT2 to the type I interferon receptor subunit IFNAR2 interferes with the assembly of the ternary interferon-IFNAR1-IFNAR2 complex and acts as a negative regulator of the type I interferon signaling pathway. This Pongo abelii (Sumatran orangutan) protein is Ubl carboxyl-terminal hydrolase 18 (USP18).